Reading from the N-terminus, the 158-residue chain is uncharacterized protein (158 aa).

2 disordered regions span residues 1-86 (MDFR…DHWW) and 138-158 (ASQV…LLGF). Residues 7-76 (SPTTCTTPAS…PTPASSGSAA (70 aa)) show a composition bias toward low complexity.

This is an uncharacterized protein from Homo sapiens (Human).